The following is a 190-amino-acid chain: 7-methyl-GTP pyrophosphatase (190 aa).

The active-site Proton acceptor is the Asp-69.

The protein belongs to the Maf family. YceF subfamily. A divalent metal cation serves as cofactor.

It is found in the cytoplasm. It carries out the reaction N(7)-methyl-GTP + H2O = N(7)-methyl-GMP + diphosphate + H(+). In terms of biological role, nucleoside triphosphate pyrophosphatase that hydrolyzes 7-methyl-GTP (m(7)GTP). May have a dual role in cell division arrest and in preventing the incorporation of modified nucleotides into cellular nucleic acids. The polypeptide is 7-methyl-GTP pyrophosphatase (Xanthomonas oryzae pv. oryzae (strain MAFF 311018)).